The sequence spans 293 residues: MQKVTFPNKILPYFLLAPQIVLTVVFFFWPASQAIYQSFMREDAFGLKSTFVELANFTAVLSDPNYLHSVQVTVVFNVLTALLAMGVALLLATAADRVIRGQTFYRTLLIWPYAVAPAVAGMLWLFIFNPAMGTFAYLLRRNGIAWDPLLDGNQAMGLVVVAAAWKQISYNFLFFVAGLQAIPKSLIEAAAIDGARGARRFWTIVFPLLAPTSFFLLVVNTVYAFFDTFGIIHAVTGGGPAKATETLVYKVYNDGFVNLNLGSSSAQSVILMAIVIALTAFQFRFVEKRVHYS.

6 helical membrane passes run 10 to 30 (ILPY…FFWP), 72 to 92 (VTVV…LLLA), 108 to 128 (LLIW…LFIF), 155 to 177 (AMGL…FFVA), 204 to 224 (IVFP…TVYA), and 261 to 281 (LGSS…LTAF). In terms of domain architecture, ABC transmembrane type-1 spans 66-282 (YLHSVQVTVV…AIVIALTAFQ (217 aa)).

It belongs to the binding-protein-dependent transport system permease family. The complex is composed of two ATP-binding proteins (UgpC), two transmembrane proteins (UgpA and UgpE) and a solute-binding protein (UgpB).

The protein resides in the cell inner membrane. In terms of biological role, part of the ABC transporter complex UgpBAEC involved in sn-glycerol-3-phosphate (G3P) import. Probably responsible for the translocation of the substrate across the membrane. In Brucella abortus biovar 1 (strain 9-941), this protein is sn-glycerol-3-phosphate transport system permease protein UgpA (ugpA).